The chain runs to 129 residues: uncharacterized protein (129 aa).

This is an uncharacterized protein from Mycoplasma genitalium (strain ATCC 33530 / DSM 19775 / NCTC 10195 / G37) (Mycoplasmoides genitalium).